The primary structure comprises 116 residues: Ribosome-binding factor A (116 aa).

The protein belongs to the RbfA family. As to quaternary structure, monomer. Binds 30S ribosomal subunits, but not 50S ribosomal subunits or 70S ribosomes.

Its subcellular location is the cytoplasm. Functionally, one of several proteins that assist in the late maturation steps of the functional core of the 30S ribosomal subunit. Associates with free 30S ribosomal subunits (but not with 30S subunits that are part of 70S ribosomes or polysomes). Required for efficient processing of 16S rRNA. May interact with the 5'-terminal helix region of 16S rRNA. This chain is Ribosome-binding factor A, found in Streptococcus agalactiae.